Here is an 830-residue protein sequence, read N- to C-terminus: Protein translocase subunit SecA (830 aa).

ATP-binding positions include glutamine 86, 104–108 (GEGKT), and aspartate 491. Zn(2+) contacts are provided by cysteine 813, cysteine 815, cysteine 824, and cysteine 825.

This sequence belongs to the SecA family. In terms of assembly, monomer and homodimer. Part of the essential Sec protein translocation apparatus which comprises SecA, SecYEG and auxiliary proteins SecDF. Other proteins may also be involved. Zn(2+) is required as a cofactor.

It localises to the cell membrane. It is found in the cytoplasm. It catalyses the reaction ATP + H2O + cellular proteinSide 1 = ADP + phosphate + cellular proteinSide 2.. Part of the Sec protein translocase complex. Interacts with the SecYEG preprotein conducting channel. Has a central role in coupling the hydrolysis of ATP to the transfer of proteins into and across the cell membrane, serving as an ATP-driven molecular motor driving the stepwise translocation of polypeptide chains across the membrane. The sequence is that of Protein translocase subunit SecA from Syntrophomonas wolfei subsp. wolfei (strain DSM 2245B / Goettingen).